Reading from the N-terminus, the 256-residue chain is Floral homeotic protein APETALA 1 (256 aa).

The MADS-box domain occupies 1–61 (MGRGRVQLKR…GKLFEYSTDP (61 aa)). One can recognise a K-box domain in the interval 88 to 178 (NTNWSMEYNR…SKQIKERENV (91 aa)). The segment at 187–206 (DEQNHGHNMPPPPPPQQHQI) is disordered.

Homodimer capable of binding to CArG-box sequences.

The protein localises to the nucleus. In terms of biological role, transcription factor that promotes early floral meristem identity in synergy with LEAFY. Displays a redundant function with CAULIFLOWER in the up-regulation of LEAFY. Required subsequently for the transition of an inflorescence meristem into a floral meristem, and for the normal development of sepals and petals in flowers. Regulates positively B class homeotic proteins. This Brassica oleracea (Wild cabbage) protein is Floral homeotic protein APETALA 1 (AP1).